Reading from the N-terminus, the 464-residue chain is Mothers against decapentaplegic homolog 5 (464 aa).

Residues 13–137 (PAVKRLLGWK…YKRVESPVLP (125 aa)) enclose the MH1 domain. Zn(2+) is bound by residues Cys-65, Cys-110, Cys-122, and His-127. Positions 166–258 (HMPLNATFPE…LAPQNMPRGD (93 aa)) are disordered. The segment covering 173–183 (FPESFQQHSGG) has biased composition (polar residues). Positions 199-216 (ASSGTYPNSPASSGPSSP) are enriched in low complexity. Polar residues predominate over residues 237 to 251 (QDGSQSMETGSSLAP). The MH2 domain maps to 270 to 464 (WCSIVYYELN…SPLNPISSVS (195 aa)).

The protein belongs to the dwarfin/SMAD family. May form trimers with the co-SMAD SMAD4.

The protein resides in the cytoplasm. It localises to the nucleus. Involved in ventralization. May mediate Bmp2b signaling during early phases of embryonic dorsal-ventral pattern formation. Required for initiation of Smad1 expression during gastrulation. The chain is Mothers against decapentaplegic homolog 5 (smad5) from Danio rerio (Zebrafish).